A 592-amino-acid chain; its full sequence is N-acetyltransferase ESCO2 (592 aa).

Phosphoserine is present on residues Ser-41 and Ser-85. A disordered region spans residues 267 to 294 (KSSVKVQNARSKNEEKLRKNPSGAVVSS). Position 309 is a phosphoserine (Ser-309). The CCHH-type zinc-finger motif lies at 384–408 (TVCKSCGMIYTASNPEDEIQHLQHH).

This sequence belongs to the acetyltransferase family. ECO subfamily.

It localises to the nucleus. The protein localises to the chromosome. The catalysed reaction is L-lysyl-[protein] + acetyl-CoA = N(6)-acetyl-L-lysyl-[protein] + CoA + H(+). In terms of biological role, acetyltransferase required for the establishment of sister chromatid cohesion. Couples the processes of cohesion and DNA replication to ensure that only sister chromatids become paired together. In contrast to the structural cohesins, the deposition and establishment factors are required only during the S phase. Acetylates the cohesin component SMC3. The chain is N-acetyltransferase ESCO2 (Esco2) from Mus musculus (Mouse).